Consider the following 208-residue polypeptide: Small ribosomal subunit protein uS4 (208 aa).

The interval 31–50 is disordered; the sequence is SALDKRAYGPGQHGQRRTKT. Positions 98–161 constitute an S4 RNA-binding domain; that stretch reads RRLDNVVYRM…KSNPQVVRAM (64 aa).

The protein belongs to the universal ribosomal protein uS4 family. Part of the 30S ribosomal subunit. Contacts protein S5. The interaction surface between S4 and S5 is involved in control of translational fidelity.

One of the primary rRNA binding proteins, it binds directly to 16S rRNA where it nucleates assembly of the body of the 30S subunit. Functionally, with S5 and S12 plays an important role in translational accuracy. In Helicobacter pylori (strain J99 / ATCC 700824) (Campylobacter pylori J99), this protein is Small ribosomal subunit protein uS4.